The sequence spans 544 residues: CTP synthase (544 aa).

The amidoligase domain stretch occupies residues 1–267 (MSKFIFVTGG…GDLLVSRLHL (267 aa)). Residue Ser-13 participates in CTP binding. Position 13 (Ser-13) interacts with UTP. Position 14–19 (14–19 (SVGKGI)) interacts with ATP. L-glutamine is bound at residue Tyr-54. Residue Asp-71 coordinates ATP. 2 residues coordinate Mg(2+): Asp-71 and Glu-141. Residues 148 to 150 (DIE), 188 to 193 (KTKPTQ), and Lys-224 each bind CTP. UTP contacts are provided by residues 188–193 (KTKPTQ) and Lys-224. Residues 299-534 (YVELKDAYYS…INAAKKVIRD (236 aa)) form the Glutamine amidotransferase type-1 domain. Gly-354 lines the L-glutamine pocket. The active-site Nucleophile; for glutamine hydrolysis is Cys-381. L-glutamine-binding positions include 382 to 385 (LGMQ), Glu-405, and Arg-462. Catalysis depends on residues His-507 and Glu-509.

Belongs to the CTP synthase family. As to quaternary structure, homotetramer.

The catalysed reaction is UTP + L-glutamine + ATP + H2O = CTP + L-glutamate + ADP + phosphate + 2 H(+). It catalyses the reaction L-glutamine + H2O = L-glutamate + NH4(+). It carries out the reaction UTP + NH4(+) + ATP = CTP + ADP + phosphate + 2 H(+). It participates in pyrimidine metabolism; CTP biosynthesis via de novo pathway; CTP from UDP: step 2/2. Allosterically activated by GTP, when glutamine is the substrate; GTP has no effect on the reaction when ammonia is the substrate. The allosteric effector GTP functions by stabilizing the protein conformation that binds the tetrahedral intermediate(s) formed during glutamine hydrolysis. Inhibited by the product CTP, via allosteric rather than competitive inhibition. Its function is as follows. Catalyzes the ATP-dependent amination of UTP to CTP with either L-glutamine or ammonia as the source of nitrogen. Regulates intracellular CTP levels through interactions with the four ribonucleotide triphosphates. The sequence is that of CTP synthase from Dehalococcoides mccartyi (strain ATCC BAA-2100 / JCM 16839 / KCTC 5957 / BAV1).